A 232-amino-acid chain; its full sequence is Peroxisomal protein PEX21 (232 aa).

A Glycyl cysteine thioester (Cys-Gly) (interchain with G-Cter in ubiquitin) cross-link involves residue C5.

The protein belongs to the peroxin-21 family. As to quaternary structure, interacts with PEX7. Post-translationally, monoubiquitinated at Cys-5; acts as a signal for PEX21 extraction and is required for proper export from peroxisomes and recycling.

The protein resides in the cytoplasm. It localises to the cytosol. Its subcellular location is the peroxisome. Functionally, mediates peroxisomal import of proteins containing a C-terminal PTS2-type peroxisomal targeting signal via its interaction with PEX7. Interaction with PEX7 only takes place when PEX7 is associated with cargo proteins containing a PTS2 peroxisomal targeting signal. PEX7 along with PTS2-containing cargo proteins are then translocated through the PEX13-PEX14 docking complex together with PEX21. In Candida glabrata (strain ATCC 2001 / BCRC 20586 / JCM 3761 / NBRC 0622 / NRRL Y-65 / CBS 138) (Yeast), this protein is Peroxisomal protein PEX21 (PEX21).